We begin with the raw amino-acid sequence, 322 residues long: Undecaprenyl-phosphate 4-deoxy-4-formamido-L-arabinose transferase (322 aa).

Topologically, residues 1-235 (MFEIHPVKKV…TCLTTTPLRM (235 aa)) are cytoplasmic. A helical membrane pass occupies residues 236 to 256 (LSLLGSIIAIGGFSIAVLLVI). Over 257-269 (LRLTFGPQWAAEG) the chain is Periplasmic. The helical transmembrane segment at 270-290 (VFMLFAVLFTFIGAQFIGMGL) threads the bilayer. Residues 291–322 (LGEYIGRIYTDVRARPRYFVQQVIRPSSKENE) are Cytoplasmic-facing.

Belongs to the glycosyltransferase 2 family.

It localises to the cell inner membrane. It carries out the reaction UDP-4-deoxy-4-formamido-beta-L-arabinose + di-trans,octa-cis-undecaprenyl phosphate = 4-deoxy-4-formamido-alpha-L-arabinopyranosyl di-trans,octa-cis-undecaprenyl phosphate + UDP. The protein operates within glycolipid biosynthesis; 4-amino-4-deoxy-alpha-L-arabinose undecaprenyl phosphate biosynthesis; 4-amino-4-deoxy-alpha-L-arabinose undecaprenyl phosphate from UDP-4-deoxy-4-formamido-beta-L-arabinose and undecaprenyl phosphate: step 1/2. Its pathway is bacterial outer membrane biogenesis; lipopolysaccharide biosynthesis. Its function is as follows. Catalyzes the transfer of 4-deoxy-4-formamido-L-arabinose from UDP to undecaprenyl phosphate. The modified arabinose is attached to lipid A and is required for resistance to polymyxin and cationic antimicrobial peptides. This chain is Undecaprenyl-phosphate 4-deoxy-4-formamido-L-arabinose transferase, found in Escherichia coli O17:K52:H18 (strain UMN026 / ExPEC).